We begin with the raw amino-acid sequence, 835 residues long: Cap-specific mRNA (nucleoside-2'-O-)-methyltransferase 1 (835 aa).

A disordered region spans residues 1–66 (MKRRNDSECT…TEGKQRSSDS (66 aa)). The Bipartite nuclear localization signal signature appears at 2–19 (KRRNDSECTAPLKKQKKR). A phosphoserine mark is found at Ser28, Ser31, Ser53, Ser66, and Ser91. Positions 57–66 (TEGKQRSSDS) are enriched in basic and acidic residues. A G-patch domain is found at 87–133 (YNSVSQKLMAKMGFKEGEGLGKYSQGRKDIVEASNQKGRRGLGLTLQ). Position 108 is an N6-acetyllysine (Lys108). Substrate contacts are provided by residues 203–207 (KSVFD) and Arg218. Residues 231-450 (FFLNRAAMKM…ERYVVCKGLK (220 aa)) enclose the RrmJ-type SAM-dependent 2'-O-MTase domain. Asn234 serves as a coordination point for S-adenosyl-L-methionine. Lys239 is an active-site residue. Residues 277-283 (CAGPGGF) and 335-336 (DI) contribute to the S-adenosyl-L-methionine site. Residue Asp364 is part of the active site. Residue 374–376 (NLQ) participates in substrate binding. Lys404 acts as the Proton acceptor in catalysis. Position 439 (Asn439) interacts with substrate. The segment at 727-835 (SSGTPKLSYT…VLSFIQTHSA (109 aa)) is interaction with POLR2A. The region spanning 752 to 786 (RTVNEPWTMGFSKSFKRKFFYNKKTKNSTFDLPAD) is the WW domain.

As to quaternary structure, interacts with POLR2A (via C-terminus).

Its subcellular location is the nucleus. The catalysed reaction is a 5'-end (N(7)-methyl 5'-triphosphoguanosine)-ribonucleoside in mRNA + S-adenosyl-L-methionine = a 5'-end (N(7)-methyl 5'-triphosphoguanosine)-(2'-O-methyl-ribonucleoside) in mRNA + S-adenosyl-L-homocysteine + H(+). In terms of biological role, S-adenosyl-L-methionine-dependent methyltransferase that mediates mRNA cap1 2'-O-ribose methylation to the 5'-cap structure of mRNAs. Methylates the ribose of the first nucleotide of a m(7)GpppG-capped mRNA and small nuclear RNA (snRNA) to produce m(7)GpppRm (cap1). Displays a preference for cap0 transcripts. Cap1 modification is linked to higher levels of translation. May be involved in the interferon response pathway. This Bos taurus (Bovine) protein is Cap-specific mRNA (nucleoside-2'-O-)-methyltransferase 1 (CMTR1).